Here is a 407-residue protein sequence, read N- to C-terminus: Melanoma-associated antigen B6 (407 aa).

A disordered region spans residues 1-175; the sequence is MPRGHKSKLR…YDVAAEGEDE (175 aa). Polar residues-rich tracts occupy residues 18–29, 57–71, 94–113, and 136–155; these read TNGQPQGLTGPQ, DASI…SPTG, and PSTS…SPTG. Residues 195–394 enclose the MAGE domain; it reads VKKKACTLAQ…GLYPHLYEDA (200 aa).

Expressed in testis. Not expressed in other normal tissues, but is expressed in tumors of different histological origins.

The chain is Melanoma-associated antigen B6 (MAGEB6) from Homo sapiens (Human).